Here is a 214-residue protein sequence, read N- to C-terminus: Exosome complex component RRP46 homolog (214 aa).

Belongs to the RNase PH family. Homodimer. Component of the RNA exosome complex. Interacts with crn-4; interaction promotes the DNase activity of crn-4. Interacts with crn-3, cps-6 and cyn-13.

Its subcellular location is the cytoplasm. It localises to the nucleus. In terms of biological role, non-catalytic component of the RNA exosome complex which has 3'-&gt;5' exoribonuclease activity and participates in a multitude of cellular RNA processing and degradation events. Involved in apoptotic DNA degradation. In vitro, does not bind or digest single-stranded RNA. In vitro, binds to double-stranded DNA without detectable DNase activity. The polypeptide is Exosome complex component RRP46 homolog (Caenorhabditis elegans).